A 68-amino-acid polypeptide reads, in one-letter code: Inhibitor of trypsin and hageman factor (68 aa).

An N-acetylserine modification is found at Ser-1. The cysteines at positions 3 and 48 are disulfide-linked.

It belongs to the protease inhibitor I13 (potato type I serine protease inhibitor) family.

Specifically inhibits both trypsin and activated Hageman factor. This Cucurbita maxima (Pumpkin) protein is Inhibitor of trypsin and hageman factor.